The sequence spans 545 residues: Esterase-5C (545 aa).

A signal peptide spans 1–19 (MLAARLIILLSFYWLSASA). An intrachain disulfide couples Cys-84 to Cys-103. A glycan (N-linked (GlcNAc...) asparagine) is linked at Asn-113. The active-site Acyl-ester intermediate is Ser-207. An intrachain disulfide couples Cys-259 to Cys-271. Asn-421 carries N-linked (GlcNAc...) asparagine glycosylation. The Charge relay system role is filled by His-467. Asn-507 carries an N-linked (GlcNAc...) asparagine glycan. The cysteines at positions 515 and 536 are disulfide-linked.

Belongs to the type-B carboxylesterase/lipase family.

Its subcellular location is the secreted. It carries out the reaction a carboxylic ester + H2O = an alcohol + a carboxylate + H(+). This chain is Esterase-5C (Est-5C), found in Drosophila pseudoobscura pseudoobscura (Fruit fly).